The sequence spans 154 residues: Putative antiporter subunit mnhG2 (154 aa).

Transmembrane regions (helical) follow at residues 11–31 (IASILIFLGSIIALISAIGIV), 51–71 (VLLTVVGVLIYFIVNSGFFSV), and 72–92 (RLLLSLVFINLTSPVGMHLIS).

The protein belongs to the CPA3 antiporters (TC 2.A.63) subunit G family. In terms of assembly, may form a heterooligomeric complex that consists of seven subunits: mnhA2, mnhB2, mnhC2, mnhD2, mnhE2, mnhF2 and mnhG2.

Its subcellular location is the cell membrane. The sequence is that of Putative antiporter subunit mnhG2 (mnhG2) from Staphylococcus epidermidis (strain ATCC 35984 / DSM 28319 / BCRC 17069 / CCUG 31568 / BM 3577 / RP62A).